Consider the following 549-residue polypeptide: uncharacterized protein (549 aa).

Helical transmembrane passes span 27 to 47, 108 to 128, 146 to 166, 197 to 217, 233 to 253, 265 to 285, 308 to 328, 352 to 372, 399 to 419, 434 to 454, 472 to 492, and 501 to 521; these read ILRF…YVFV, PIVV…GVIF, TGLV…LAIA, AVAI…IPML, FIAI…FLLV, VAAI…LISL, FLVI…LSIL, LVLL…IFGV, TLLV…VGLG, LMLA…VAIG, IVSL…FQAI, and IFIW…VLIG.

It is found in the cell membrane. This is an uncharacterized protein from Mycoplasma pneumoniae (strain ATCC 29342 / M129 / Subtype 1) (Mycoplasmoides pneumoniae).